We begin with the raw amino-acid sequence, 143 residues long: Spliceosomal protein DIB1 (143 aa).

This sequence belongs to the DIM1 family. As to quaternary structure, component of the 25S [U4/U6.U5] tri-snRNP.

The protein localises to the nucleus. Functionally, essential role in pre-mRNA splicing. Also essential for entry into mitosis (G2/M progression) as well as for chromosome segregation during mitosis. This is Spliceosomal protein DIB1 (DIB1) from Eremothecium gossypii (strain ATCC 10895 / CBS 109.51 / FGSC 9923 / NRRL Y-1056) (Yeast).